Reading from the N-terminus, the 290-residue chain is UPF0761 membrane protein YihY (290 aa).

A run of 6 helical transmembrane segments spans residues 44-64 (LLSL…FPMF), 104-124 (VGAC…DSAL), 140-160 (FAVY…SLAI), 183-203 (IFPL…VPTI), 210-230 (AIVG…GFAL), and 244-264 (VLAV…IVLL).

The protein belongs to the UPF0761 family.

The protein resides in the cell inner membrane. This Escherichia coli O1:K1 / APEC protein is UPF0761 membrane protein YihY.